A 340-amino-acid chain; its full sequence is Proline-rich transmembrane protein 2 (340 aa).

The interval 1 to 261 (MAASSSEISE…AGPGVEGGEG (261 aa)) is disordered. Topologically, residues 1-268 (MAASSSEISE…GEGTQKPRDY (268 aa)) are cytoplasmic. The segment covering 9 to 18 (SEMKGVEESP) has biased composition (basic and acidic residues). A Phosphoserine modification is found at Ser-28. Residue Thr-74 is modified to Phosphothreonine. Composition is skewed to pro residues over residues 131 to 155 (PPEP…PKPA) and 197 to 207 (APEPHSPPSKK). Ser-238 is modified (phosphoserine). At Arg-240 the chain carries Omega-N-methylarginine. Ser-248 and Ser-249 each carry phosphoserine. The segment at residues 269–289 (IILAILSCFCPMWPVNIVAFA) is an intramembrane region (helical). Residues 290-317 (YAVMSRNSLQQGDVDGAQRLGRVAKLLS) are Cytoplasmic-facing. A helical transmembrane segment spans residues 318-338 (IVALVGGVLIIIASCVINLGV). Over 339 to 340 (YK) the chain is Extracellular.

The protein belongs to the CD225/Dispanin family. As to quaternary structure, component of the outer core of AMPAR complex. AMPAR complex consists of an inner core made of 4 pore-forming GluA/GRIA proteins (GRIA1, GRIA2, GRIA3 and GRIA4) and 4 major auxiliary subunits arranged in a twofold symmetry. One of the two pairs of distinct binding sites is occupied either by CNIH2, CNIH3 or CACNG2, CACNG3. The other harbors CACNG2, CACNG3, CACNG4, CACNG8 or GSG1L. This inner core of AMPAR complex is complemented by outer core constituents binding directly to the GluA/GRIA proteins at sites distinct from the interaction sites of the inner core constituents. Outer core constituents include at least PRRT1, PRRT2, CKAMP44/SHISA9, FRRS1L and NRN1. The proteins of the inner and outer core serve as a platform for other, more peripherally associated AMPAR constituents. Alone or in combination, these auxiliary subunits control the gating and pharmacology of the AMPAR complex and profoundly impact their biogenesis and protein processing. Interacts with intersectin 1/ITSN1. Interacts with SNARE complex components, including SNAP25, STX1A, SYT1 and SYT2; this interaction may inhibit SNARE complex formation.

Its subcellular location is the cell membrane. It is found in the presynaptic cell membrane. The protein localises to the synapse. The protein resides in the cell projection. It localises to the axon. Its subcellular location is the cytoplasmic vesicle. It is found in the secretory vesicle. The protein localises to the synaptic vesicle membrane. The protein resides in the postsynaptic density membrane. It localises to the dendritic spine. Its function is as follows. As a component of the outer core of AMPAR complex, may be involved in synaptic transmission in the central nervous system. In hippocampal neurons, in presynaptic terminals, plays an important role in the final steps of neurotransmitter release, possibly by regulating Ca(2+)-sensing. In the cerebellum, may inhibit SNARE complex formation and down-regulate short-term facilitation. This Homo sapiens (Human) protein is Proline-rich transmembrane protein 2 (PRRT2).